Here is a 613-residue protein sequence, read N- to C-terminus: V-type proton ATPase catalytic subunit A isoform 2 (613 aa).

240 to 247 contributes to the ATP binding site; the sequence is GAFGCGKT.

This sequence belongs to the ATPase alpha/beta chains family. V-ATPase is a heteromultimeric enzyme composed of a peripheral catalytic V1 complex (main components: subunits A, B, C, D, E, and F) attached to an integral membrane V0 proton pore complex (main component: the proteolipid protein).

It carries out the reaction ATP + H2O + 4 H(+)(in) = ADP + phosphate + 5 H(+)(out). Catalytic subunit of the peripheral V1 complex of vacuolar ATPase. V-ATPase vacuolar ATPase is responsible for acidifying a variety of intracellular compartments in eukaryotic cells. The protein is V-type proton ATPase catalytic subunit A isoform 2 of Acetabularia acetabulum (Mermaid's wine glass).